The chain runs to 171 residues: Endoribonuclease YbeY (171 aa).

Positions 126, 130, and 136 each coordinate Zn(2+).

The protein belongs to the endoribonuclease YbeY family. It depends on Zn(2+) as a cofactor.

It is found in the cytoplasm. Single strand-specific metallo-endoribonuclease involved in late-stage 70S ribosome quality control and in maturation of the 3' terminus of the 16S rRNA. The protein is Endoribonuclease YbeY of Rhizobium etli (strain CIAT 652).